A 395-amino-acid chain; its full sequence is Tyrosine--tRNA ligase 2 (395 aa).

The 'HIGH' region motif lies at 42 to 51 (PTAPDIHLGH). The 'KMSKS' region motif lies at 226 to 230 (KMSKS). An ATP-binding site is contributed by Lys-229. Residues 334-394 (TPVANLLKDA…GKRKFARITI (61 aa)) form the S4 RNA-binding domain.

It belongs to the class-I aminoacyl-tRNA synthetase family. TyrS type 2 subfamily. As to quaternary structure, homodimer.

The protein resides in the cytoplasm. It catalyses the reaction tRNA(Tyr) + L-tyrosine + ATP = L-tyrosyl-tRNA(Tyr) + AMP + diphosphate + H(+). In terms of biological role, catalyzes the attachment of tyrosine to tRNA(Tyr) in a two-step reaction: tyrosine is first activated by ATP to form Tyr-AMP and then transferred to the acceptor end of tRNA(Tyr). This Vibrio parahaemolyticus serotype O3:K6 (strain RIMD 2210633) protein is Tyrosine--tRNA ligase 2.